The primary structure comprises 253 residues: L-cysteine S-thiosulfotransferase subunit SoxA (253 aa).

The N-terminal stretch at 1 to 17 is a signal peptide; the sequence is MGKWVTIIFVLFLYAIA. The region spanning 44 to 129 is the Cytochrome c domain; the sequence is VYAEQGRDMF…SIATYVATLS (86 aa). Residues Cys-64, Cys-67, His-68, Cys-102, Cys-165, Cys-168, and His-169 each contribute to the heme c site. Arg-210 is a binding site for substrate. Cys-214 lines the heme c pocket. The active-site Cysteine persulfide intermediate is Cys-214.

Belongs to the SoxA family. As to quaternary structure, heterodimer of SoxA and SoxX. Heme c is required as a cofactor. Post-translationally, cysteine persulfide at Cys-214.

The protein localises to the periplasm. The catalysed reaction is L-cysteinyl-[SoxY protein] + thiosulfate + 2 Fe(III)-[cytochrome c] = S-sulfosulfanyl-L-cysteinyl-[SoxY protein] + 2 Fe(II)-[cytochrome c] + 2 H(+). The enzyme catalyses S-sulfanyl-L-cysteinyl-[SoxY protein] + thiosulfate + 2 Fe(III)-[cytochrome c] = S-(2-sulfodisulfanyl)-L-cysteinyl-[SoxY protein] + 2 Fe(II)-[cytochrome c] + 2 H(+). Functionally, C-type diheme cytochrome, which is part of the SoxAX cytochrome complex involved in sulfur oxidation. The SoxAX complex catalyzes the formation of a heterodisulfide bond between the conserved cysteine residue on a sulfur carrier SoxYZ complex subunit SoxY and thiosulfate or other inorganic sulfur substrates. This leads to the liberation of two electrons, which may be transferred from the SoxAX complex to another cytochrome c that then channels them into the respiratory electron transport chain. Some electrons may be used for reductive CO(2) fixation. This Hydrogenobacter thermophilus (strain DSM 6534 / IAM 12695 / TK-6) protein is L-cysteine S-thiosulfotransferase subunit SoxA.